Consider the following 367-residue polypeptide: Alginate lyase (367 aa).

The N-terminal stretch at 1 to 24 (MTIINRKTAPALLALALFGGAAQA) is a signal peptide. Residues 63–64 (SK), 136–137 (HT), and Y254 each bind substrate.

The protein belongs to the polysaccharide lyase 5 family.

The protein resides in the periplasm. The catalysed reaction is Eliminative cleavage of alginate to give oligosaccharides with 4-deoxy-alpha-L-erythro-hex-4-enuronosyl groups at their non-reducing ends and beta-D-mannuronate at their reducing end.. Its function is as follows. Catalyzes the depolymerization of alginate by cleaving the beta-1,4 glycosidic bond between two adjacent sugar residues via a beta-elimination mechanism. May serve to degrade mislocalized alginate that is trapped in the periplasmic space. The protein is Alginate lyase of Pseudomonas entomophila (strain L48).